Here is a 133-residue protein sequence, read N- to C-terminus: Small ribosomal subunit protein uS8 (133 aa).

It belongs to the universal ribosomal protein uS8 family. As to quaternary structure, part of the 30S ribosomal subunit. Contacts proteins S5 and S12.

One of the primary rRNA binding proteins, it binds directly to 16S rRNA central domain where it helps coordinate assembly of the platform of the 30S subunit. This Koribacter versatilis (strain Ellin345) protein is Small ribosomal subunit protein uS8.